Here is a 338-residue protein sequence, read N- to C-terminus: tRNA N6-adenosine threonylcarbamoyltransferase (338 aa).

2 residues coordinate Fe cation: H111 and H115. Substrate-binding positions include 133–137 (LVSGG), D166, G179, D183, and N275. Residue D300 coordinates Fe cation.

Belongs to the KAE1 / TsaD family. It depends on Fe(2+) as a cofactor.

The protein resides in the cytoplasm. It carries out the reaction L-threonylcarbamoyladenylate + adenosine(37) in tRNA = N(6)-L-threonylcarbamoyladenosine(37) in tRNA + AMP + H(+). Required for the formation of a threonylcarbamoyl group on adenosine at position 37 (t(6)A37) in tRNAs that read codons beginning with adenine. Is involved in the transfer of the threonylcarbamoyl moiety of threonylcarbamoyl-AMP (TC-AMP) to the N6 group of A37, together with TsaE and TsaB. TsaD likely plays a direct catalytic role in this reaction. This chain is tRNA N6-adenosine threonylcarbamoyltransferase, found in Treponema denticola (strain ATCC 35405 / DSM 14222 / CIP 103919 / JCM 8153 / KCTC 15104).